The sequence spans 263 residues: Putative ankyrin repeat domain-containing protein 20A12 pseudogene (263 aa).

2 coiled-coil regions span residues 65–121 (KKDL…MLES) and 171–263 (NQVF…IQLH).

The chain is Putative ankyrin repeat domain-containing protein 20A12 pseudogene from Homo sapiens (Human).